The sequence spans 284 residues: uncharacterized protein (284 aa).

The signal sequence occupies residues 1 to 24; sequence MLYSRESRTTVLFLALVTSLTVLC. Residues 25–84 are Cytoplasmic-facing; the sequence is HSVDVTTVFTTSTITEITTVTAAPQPQNKAETALNTATNIIQTMQFLFNCAPFKWKGPLK. A helical transmembrane segment spans residues 85–104; that stretch reads ITSCALNFIVLLLTAWGYLL. Over 105–284 the chain is Extracellular; it reads KYLQENKLNS…SVHMYSSSLL (180 aa). The N-linked (GlcNAc...) asparagine glycan is linked to Asn270.

This sequence to yeast YNL019c.

It localises to the cell membrane. This is an uncharacterized protein from Saccharomyces cerevisiae (strain ATCC 204508 / S288c) (Baker's yeast).